The following is a 168-amino-acid chain: Protein B-Myc (168 aa).

Disordered regions lie at residues 26 to 94 (DDEE…DLPE) and 146 to 168 (EGAS…TCNT). A phosphoserine mark is found at S59 and S67.

It localises to the nucleus. Its function is as follows. Seems to act as an inhibitor of cellular proliferation. In Rattus norvegicus (Rat), this protein is Protein B-Myc (Mycb).